A 130-amino-acid chain; its full sequence is Small ribosomal subunit protein uS11 (130 aa).

This sequence belongs to the universal ribosomal protein uS11 family. In terms of assembly, part of the 30S ribosomal subunit. Interacts with proteins S7 and S18. Binds to IF-3.

In terms of biological role, located on the platform of the 30S subunit, it bridges several disparate RNA helices of the 16S rRNA. Forms part of the Shine-Dalgarno cleft in the 70S ribosome. The chain is Small ribosomal subunit protein uS11 from Acholeplasma laidlawii (strain PG-8A).